We begin with the raw amino-acid sequence, 368 residues long: Zinc finger protein 24 (368 aa).

K22 participates in a covalent cross-link: Glycyl lysine isopeptide (Lys-Gly) (interchain with G-Cter in SUMO2). A Glycyl lysine isopeptide (Lys-Gly) (interchain with G-Cter in SUMO1); alternate cross-link involves residue K27. A Glycyl lysine isopeptide (Lys-Gly) (interchain with G-Cter in SUMO2); alternate cross-link involves residue K27. The 83-residue stretch at 52–134 (RQRFRQFGYQ…AVLEDLESEL (83 aa)) folds into the SCAN box domain. A phosphoserine mark is found at S132 and S142. Glycyl lysine isopeptide (Lys-Gly) (interchain with G-Cter in SUMO2) cross-links involve residues K147, K177, and K236. The C2H2-type 1 zinc-finger motif lies at 251 to 273 (HICDECGKHFSQGSALILHQRIH). The necessary and sufficient for nuclear localization stretch occupies residues 251 to 301 (HICDECGKHFSQGSALILHQRIHSGEKPYGCVECGKAFSRSSILVQHQRVH). Phosphoserine is present on S274. Glycyl lysine isopeptide (Lys-Gly) (interchain with G-Cter in SUMO2) cross-links involve residues K277 and K286. C2H2-type zinc fingers lie at residues 279–301 (YGCV…QRVH), 307–329 (YKCL…QRIH), and 335–357 (YECV…QRRH). Position 292 is a phosphoserine (S292). At Y335 the chain carries Phosphotyrosine. Glycyl lysine isopeptide (Lys-Gly) (interchain with G-Cter in SUMO2) cross-links involve residues K361 and K367.

The protein belongs to the krueppel C2H2-type zinc-finger protein family. In terms of processing, sumoylated. Widely expressed with highest levels in heart, brain, liver, skeletal muscle, kidney and testis and very low levels in spleen and lung.

The protein resides in the nucleus. Transcription factor required for myelination of differentiated oligodendrocytes. Required for the conversion of oligodendrocytes from the premyelinating to the myelinating state. In the developing central nervous system (CNS), involved in the maintenance in the progenitor stage by promoting the cell cycle. Specifically binds to the 5'-TCAT-3' DNA sequence. Has transcription repressor activity in vitro. This chain is Zinc finger protein 24, found in Mus musculus (Mouse).